The primary structure comprises 454 residues: Tubulin gamma chain (454 aa).

Residue 142-148 participates in GTP binding; that stretch reads AGGTGSG.

This sequence belongs to the tubulin family.

The protein localises to the cytoplasm. The protein resides in the cytoskeleton. Its subcellular location is the microtubule organizing center. It is found in the spindle pole body. Its function is as follows. Tubulin is the major constituent of microtubules. The gamma chain is found at microtubule organizing centers (MTOC) such as the spindle pole or the centrosome, suggesting that it is involved in the minus-end nucleation of microtubule assembly. Interacts physically with beta-tubulin and is involved in microtubule function. In Emericella nidulans (strain FGSC A4 / ATCC 38163 / CBS 112.46 / NRRL 194 / M139) (Aspergillus nidulans), this protein is Tubulin gamma chain (mipA).